The chain runs to 285 residues: Bifunctional protein FolD (285 aa).

Residues 165-167 (GRS) and S190 contribute to the NADP(+) site.

The protein belongs to the tetrahydrofolate dehydrogenase/cyclohydrolase family. Homodimer.

It carries out the reaction (6R)-5,10-methylene-5,6,7,8-tetrahydrofolate + NADP(+) = (6R)-5,10-methenyltetrahydrofolate + NADPH. The enzyme catalyses (6R)-5,10-methenyltetrahydrofolate + H2O = (6R)-10-formyltetrahydrofolate + H(+). Its pathway is one-carbon metabolism; tetrahydrofolate interconversion. Its function is as follows. Catalyzes the oxidation of 5,10-methylenetetrahydrofolate to 5,10-methenyltetrahydrofolate and then the hydrolysis of 5,10-methenyltetrahydrofolate to 10-formyltetrahydrofolate. The protein is Bifunctional protein FolD of Ligilactobacillus salivarius (strain UCC118) (Lactobacillus salivarius).